The following is a 355-amino-acid chain: NADH dehydrogenase [ubiquinone] 1 alpha subcomplex subunit 10, mitochondrial (355 aa).

A mitochondrion-targeting transit peptide spans 1–35 (MALRLLRLVPASAPARGLAAGAQRVGRIHTSVHCK). K122 carries the post-translational modification N6-acetyllysine; alternate. An N6-succinyllysine; alternate modification is found at K122. S250 carries the post-translational modification Phosphoserine; by PINK1. Residue K285 is modified to N6-succinyllysine.

It belongs to the complex I NDUFA10 subunit family. In terms of assembly, complex I is composed of 45 different subunits. This a component of the hydrophobic protein fraction. FAD serves as cofactor. Phosphorylation at Ser-250 by PINK1 is required for the binding and/or reduction of the complex I substrate ubiquinone. Post-translationally, acetylation of Lys-242 is observed in liver mitochondria from fasted mice but not from fed mice.

The protein localises to the mitochondrion matrix. Its function is as follows. Accessory subunit of the mitochondrial membrane respiratory chain NADH dehydrogenase (Complex I), that is believed not to be involved in catalysis. Complex I functions in the transfer of electrons from NADH to the respiratory chain. The immediate electron acceptor for the enzyme is believed to be ubiquinone. This is NADH dehydrogenase [ubiquinone] 1 alpha subcomplex subunit 10, mitochondrial (Ndufa10) from Mus musculus (Mouse).